The chain runs to 391 residues: Multidrug resistance protein MdtL (391 aa).

Helical transmembrane passes span 4-24 (FLIC…MYLV), 42-62 (IAFS…GKVA), 69-89 (PVAI…SLAE), 93-113 (LFLA…VVAF), 131-151 (LLNG…HLIM), 158-178 (SLFW…LFIL), 203-222 (FFLS…LTFV), 245-265 (ALTA…LGIF), 269-289 (TLMI…AVSP), 293-313 (VSLF…GVAM), 331-351 (LGIA…VVGI), and 356-376 (MLIG…MFVA).

This sequence belongs to the major facilitator superfamily. DHA1 family. MdtL (TC 2.A.1.2.22) subfamily.

It localises to the cell inner membrane. Its function is as follows. Confers resistance to chloramphenicol. The chain is Multidrug resistance protein MdtL from Escherichia coli (strain 55989 / EAEC).